Consider the following 319-residue polypeptide: Probable arabinan endo-1,5-alpha-L-arabinosidase C (319 aa).

The first 16 residues, 1 to 16 (MFVYTLIFLFLAAANA), serve as a signal peptide directing secretion. Asp-31 (proton acceptor) is an active-site residue. N-linked (GlcNAc...) asparagine glycosylation occurs at Asn-190. The active-site Proton donor is Glu-198. Asn-222 carries N-linked (GlcNAc...) asparagine glycosylation.

It belongs to the glycosyl hydrolase 43 family.

Its subcellular location is the secreted. It carries out the reaction Endohydrolysis of (1-&gt;5)-alpha-arabinofuranosidic linkages in (1-&gt;5)-arabinans.. It participates in glycan metabolism; L-arabinan degradation. In terms of biological role, endo-1,5-alpha-L-arabinanase involved in degradation of pectin. Its preferred substrate is linear 1,5-alpha-L-arabinan. The chain is Probable arabinan endo-1,5-alpha-L-arabinosidase C (abnC) from Aspergillus clavatus (strain ATCC 1007 / CBS 513.65 / DSM 816 / NCTC 3887 / NRRL 1 / QM 1276 / 107).